Here is a 112-residue protein sequence, read N- to C-terminus: UPF0102 protein Pmob_0702 (112 aa).

It belongs to the UPF0102 family.

The chain is UPF0102 protein Pmob_0702 from Petrotoga mobilis (strain DSM 10674 / SJ95).